The following is a 236-amino-acid chain: MGRGKIEIKRIENTTNRQVTFCKRRNGLLKKAYELSVLCDAEVALIVFSSRGRLYEYANNSVKSTVERYKKANSDTSNSGTVAEVNAQHYQQESSKLRQQISSLQNANSRTIVGDSINTMSLRDLKQVENRLEKGIAKIRARKNELLYAEVEYMQKREVELQNDNMYLRSKVVENERGQQPLNMMGAASTSEYDHMVNNPYDSRNFLQVNIMQQPQHYAHQLQPTTLQLGQQPAFN.

One can recognise an MADS-box domain in the interval 1 to 61; the sequence is MGRGKIEIKR…GRLYEYANNS (61 aa). The 92-residue stretch at 87–178 folds into the K-box domain; sequence AQHYQQESSK…RSKVVENERG (92 aa).

As to expression, expressed in lemmas, paleas and lodicules.

It localises to the nucleus. Its function is as follows. Probable transcription factor involved in the development of floral organs. Acts as C-class protein in association with MADS58. Involved in the control of lodicule number (whorl 2), stamen specification (whorl 3) and floral meristem determinacy (whorl 4), but not in the regulation of carpel morphogenesis. Plays a more predominant role in controlling lodicule development and in specifying stamen identity than MADS58. This Oryza sativa subsp. japonica (Rice) protein is MADS-box transcription factor 3 (MADS3).